We begin with the raw amino-acid sequence, 993 residues long: uncharacterized protein (993 aa).

A signal peptide spans 1–24; sequence MLLFKFNFTTAFLFTILAFAQARS. 15 N-linked (GlcNAc...) asparagine glycosylation sites follow: Asn-7, Asn-44, Asn-89, Asn-121, Asn-138, Asn-161, Asn-169, Asn-232, Asn-361, Asn-386, Asn-393, Asn-423, Asn-447, Asn-480, and Asn-488. The active site involves Glu-504. 3 N-linked (GlcNAc...) asparagine glycosylation sites follow: Asn-545, Asn-548, and Asn-614. The active-site Proton donor is Asp-672. 8 N-linked (GlcNAc...) asparagine glycosylation sites follow: Asn-673, Asn-814, Asn-826, Asn-835, Asn-846, Asn-910, Asn-940, and Asn-987.

The protein belongs to the glycosyl hydrolase 31 family.

This is an uncharacterized protein from Schizosaccharomyces pombe (strain 972 / ATCC 24843) (Fission yeast).